The following is a 74-amino-acid chain: Translational regulator CsrA (74 aa).

This sequence belongs to the CsrA/RsmA family. As to quaternary structure, homodimer; the beta-strands of each monomer intercalate to form a hydrophobic core, while the alpha-helices form wings that extend away from the core.

The protein resides in the cytoplasm. Functionally, a translational regulator that binds mRNA to regulate translation initiation and/or mRNA stability. Usually binds in the 5'-UTR at or near the Shine-Dalgarno sequence preventing ribosome-binding, thus repressing translation. Its main target seems to be the major flagellin gene, while its function is anatagonized by FliW. The chain is Translational regulator CsrA from Bacillus velezensis (strain DSM 23117 / BGSC 10A6 / LMG 26770 / FZB42) (Bacillus amyloliquefaciens subsp. plantarum).